A 473-amino-acid polypeptide reads, in one-letter code: Bifunctional protein HldE (473 aa).

Residues 1–317 form a ribokinase region; that stretch reads MKLSMPRFDQ…RRAVQREQGS (317 aa). Residue 194–197 participates in ATP binding; it reads NLSE. Residue Asp263 is part of the active site. The interval 343–473 is cytidylyltransferase; sequence FTNGCFDILH…TAIVEKIRQR (131 aa).

In the N-terminal section; belongs to the carbohydrate kinase PfkB family. It in the C-terminal section; belongs to the cytidylyltransferase family. In terms of assembly, homodimer.

The catalysed reaction is D-glycero-beta-D-manno-heptose 7-phosphate + ATP = D-glycero-beta-D-manno-heptose 1,7-bisphosphate + ADP + H(+). It catalyses the reaction D-glycero-beta-D-manno-heptose 1-phosphate + ATP + H(+) = ADP-D-glycero-beta-D-manno-heptose + diphosphate. Its pathway is nucleotide-sugar biosynthesis; ADP-L-glycero-beta-D-manno-heptose biosynthesis; ADP-L-glycero-beta-D-manno-heptose from D-glycero-beta-D-manno-heptose 7-phosphate: step 1/4. The protein operates within nucleotide-sugar biosynthesis; ADP-L-glycero-beta-D-manno-heptose biosynthesis; ADP-L-glycero-beta-D-manno-heptose from D-glycero-beta-D-manno-heptose 7-phosphate: step 3/4. Catalyzes the phosphorylation of D-glycero-D-manno-heptose 7-phosphate at the C-1 position to selectively form D-glycero-beta-D-manno-heptose-1,7-bisphosphate. Functionally, catalyzes the ADP transfer from ATP to D-glycero-beta-D-manno-heptose 1-phosphate, yielding ADP-D-glycero-beta-D-manno-heptose. The chain is Bifunctional protein HldE from Pseudomonas aeruginosa (strain LESB58).